The chain runs to 1364 residues: MNKIYYLKYCHITKSLIAVSELARRVTCKSHRRLSRRVILTSVAALSLSSAWPALSATVSAEIPYQIFRDFAENKGQFTPGTTNISIYDKQGNLVGKLDKAPMADFSSATITTGSLPPGDHTLYSPQYVVTAKHVSGSDTMSFGYAKNTYTAVGTNNNSGLDIKTRRLSKLVTEVAPAEVSDIGAVSGAYQAGGRFTEFYRLGGGMQYVKDKNGNRTQVYTNGGFLVGGTVSALNSYNNGQMITAQTGDIFNPANGPLANYLNMGDSGSPLFAYDSLQKKWVLIGVLSSGTNYGNNWVVTTQDFLGQQPQNDFDKTIAYTSGEGVLQWKYDAANGTGTLTQGNTTWDMHGKKGNDLNAGKNLLFTGNNGEVVLQNSVNQGAGYLQFAGDYRVSALNGQTWMGGGIITDKGTHVLWQVNGVAGDNLHKTGEGTLTVNGTGVNAGGLKVGDGTVILNQQADADGKVQAFSSVGIASGRPTVVLSDSQQVNPDNISWGYRGGRLELNGNNLTFTRLQAADYGAIITNNSEKKSTVTLDLQTLKASDINVPVNTVSIFGGRGAPGDLYYDSSTKQYFILKASSYSPFFSDLNNSSVWQNVGKDRNKAIDTVKQQKIEASSQPYMYHGQLNGNMDVNIPQLSGKDVLALDGSVNLPEGSITKKSGTLIFQGHPVIHAGTTTSSSQSDWETRQFTLEKLKLDAATFHLSRNGKMQGDINATNGSTVILGSSRVFTDRSDGTGNAVFSVEGSATATTVGDQSDYSGNVTLENKSSLQIMERFTGGIEAYDSTVSVTSQNAVFDRVGSFVNSSLTLGKGAKLTAQSGIFSTGAVDVKENASLTLTGMPSAQKQGYYSPVISTTEGINLEDNASFSVKNMGYLSSDIHAGTTAATINLGDSDADAGKTDSPLFSSLMKGYNAVLRGSITGAQSTVNMINALWYSDGKSEAGALKAKGSRIELGDGKHFATLQVKELSADNTTFLMHTNNSRADQLNVTDKLSGSNNSVLVDFLNKPASEMSVTLITAPKGSDEKTFTAGTQQIGFSNVTPVISTEKTDDATKWVLTGYQTTADAGASKAAKDFMASGYKSFLTEVNNLNKRMGDLRDTQGDAGVWARIMNGTGSADGDYSDNYTHVQIGVDRKHELDGVDLFTGALLTYTDSNASSHAFSGKNKSVGGGLYASALFNSGAYFDLIGKYLHHDNQHTANFASLGTKDYSSHSWYAGAEVGYRYHLTKESWVEPQIELVYGSVSGKAFSWEDRGMALSMKDKDYNPLIGRTGVDVGRAFSGDDWKITARAGLGYQFDLLANGETVLQDASGEKRFEGEKDSRMLMTVGMNAEIKDNMRLGLELEKSAFGKYNVDNAINANFRYVF.

The N-terminal stretch at 1-56 is a signal peptide; the sequence is MNKIYYLKYCHITKSLIAVSELARRVTCKSHRRLSRRVILTSVAALSLSSAWPALS. The Peptidase S6 domain maps to 57–307; the sequence is ATVSAEIPYQ…VVTTQDFLGQ (251 aa). Active-site charge relay system residues include His134, Asp162, and Ser267. One can recognise an Autotransporter domain in the interval 1098–1364; that stretch reads DTQGDAGVWA…AINANFRYVF (267 aa).

Cleaved to release the mature protein from the outer membrane. Cleavage is performed by an unknown protease.

It is found in the periplasm. The protein resides in the secreted. Its subcellular location is the cell surface. It localises to the cell outer membrane. With respect to regulation, inhibited by the serine protease inhibitor PMSF, but not by benzamidine, alpha 1-antitrypsin, alpha 1-antichymotrypsin. Not inhibited by metalloprotease inhibitors such as EDTA and orthophenanthroline. In terms of biological role, major protein secreted in laboratory media showing proteolytic activity. May be involved in invasion and destruction of host intestinal epithelium. This chain is Serine protease SepA autotransporter (sepA), found in Shigella flexneri.